Reading from the N-terminus, the 60-residue chain is Large ribosomal subunit protein bL32 (60 aa).

Residues 1 to 60 are disordered; it reads MAVQQNKKTPSKRGMHRSHDFLVAPQLSVEQTTGETHMRHHISPNGFYRGRKVLKTKNDE. Residues 49–60 show a composition bias toward basic residues; it reads RGRKVLKTKNDE.

The protein belongs to the bacterial ribosomal protein bL32 family.

This chain is Large ribosomal subunit protein bL32, found in Herminiimonas arsenicoxydans.